The sequence spans 3987 residues: Hybrid PKS-NRPS synthetase buaA (3987 aa).

Residues 5-438 (NEPIAIVGSG…GANAHAIVES (434 aa)) form the Ketosynthase family 3 (KS3) domain. Catalysis depends on for beta-ketoacyl synthase activity residues Cys176, His315, and His358. Residues 546 to 872 (VFTGQGAQWP…RNADDVESFS (327 aa)) are malonyl-CoA:ACP transacylase (MAT) domain. Residues 939-1072 (HELLGVRVDS…GAVRLQLGAA (134 aa)) form an N-terminal hotdog fold region. The 302-residue stretch at 939-1240 (HELLGVRVDS…VAPLVPVTQS (302 aa)) folds into the PKS/mFAS DH domain. A dehydratase (DH) domain region spans residues 940–1238 (ELLGVRVDSL…LQVAPLVPVT (299 aa)). His970 functions as the Proton acceptor; for dehydratase activity in the catalytic mechanism. The C-terminal hotdog fold stretch occupies residues 1087-1240 (MNDVNIEHFY…VAPLVPVTQS (154 aa)). The Proton donor; for dehydratase activity role is filled by Asp1147. A methyltransferase (MT) domain region spans residues 1399 to 1583 (YLANLVKQLS…TSTPSHDVFM (185 aa)). Residues 2113–2285 (TYLLVGLTGE…LPGSVMNLAG (173 aa)) are ketoreductase (KR) domain. Residues 2397-2473 (RVLTNGLILT…AMVEDTMERM (77 aa)) form the Carrier 1 domain. Ser2433 is modified (O-(pantetheine 4'-phosphoryl)serine). The disordered stretch occupies residues 2489–2561 (AADRPSAPSD…PPPSSVMSED (73 aa)). Positions 2514–2525 (HNSEEQESHAME) are enriched in basic and acidic residues. Over residues 2532–2550 (STTSGGECSSTKESSSSEA) the composition is skewed to low complexity. The interval 2582–3001 (MGYGSLQFFF…QLVKMCAYME (420 aa)) is condensation (C) domain. The segment at 3042 to 3448 (LDVAQARPEA…GQLYYEGRIA (407 aa)) is adenylation (A) (KR) domain. Positions 3564–3644 (ADLSETELAL…AMALKIRNSQ (81 aa)) constitute a Carrier 2 domain. Ser3604 bears the O-(pantetheine 4'-phosphoryl)serine mark. Residues 3680–3916 (TVVLTGATGY…TGIAAAAVGA (237 aa)) are reductase (R) domain.

The protein in the C-terminal section; belongs to the NRP synthetase family.

It participates in mycotoxin biosynthesis. In terms of biological role, hybrid PKS-NRPS synthetase; part of the gene cluster that mediates the biosynthesis of burnettramic acids, an unusual class of bolaamphiphilic pyrrolizidinediones that display potent antibacterial, antifungal, and cytotoxic activities. The first step of the biosynthesis of burnettramic acids is the hydroxylation of proline by the proline hydroxylase buaE to generate 4-hydroxyproline. The PKS-NRPS buaA and trans-enoyl reductase buaC construct the highly reduced polyketide chain, and the condensation (C) domain of buaA then catalyzes the amide bond formation with the activated 4-hydroxyproline. This is followed by the R domain releasing the nascent polyketide-peptide directly via a Dieckmann condensation to afford a tetramic acid fused to the hydroxyproline, generating the bicyclic pyrrolidinedione moiety. The cytochrome P450 monooxygenases buaD and buaG are likely responsible for the multiple hydroxylations on the polyketide chain and its terminus, although in a heterologous context, buaD does not appear to be required. Therefore, while buaG may be a multifunctional cytochrome P450 monooxygenase, it cannot be ruled out that the two secondary alcohols on the polyketide chain could have an acetate origin. Finally, the glycosyltransferase buaB transfers beta-D-mannose to the aglycone burnettramic acid A to form burnettramic acid A. Burnettramic acid B is a minor cis-pyrrolizidine epimer of burnettramic acid A and it is likely that small amounts of it form naturally in acidic environments. This chain is Hybrid PKS-NRPS synthetase buaA, found in Petromyces alliaceus (Aspergillus alliaceus).